Reading from the N-terminus, the 724-residue chain is Eukaryotic elongation factor 2 kinase (724 aa).

N-acetylalanine is present on Ala2. A Phosphoserine modification is found at Ser27. At Ser61 the chain carries Phosphoserine; by autocatalysis. Phosphoserine is present on residues Ser70, Ser73, and Ser77. Residues 80 to 93 form a calmodulin-binding region; it reads FKEAWKHAIEKAKH. An Alpha-type protein kinase domain is found at 115–325; the sequence is RYNAVTGEWL…ICQSMGLTPF (211 aa). At Ser242 the chain carries Phosphoserine. Residue 295 to 301 participates in ATP binding; that stretch reads GDGNLGV. A phosphothreonine; by autocatalysis mark is found at Thr347 and Thr352. The segment at 353–476 is disordered; it reads EEKCGSPRIR…HESDEDSLGS (124 aa). Ser358 is modified (phosphoserine; by MAPK13 and CDK1). The span at 358–376 shows a compositional bias: low complexity; sequence SPRIRTLSSSRPPLLLRLS. Ser365 is subject to Phosphoserine; by autocatalysis, RPS6KA1 and RPS6KB1. Over residues 385-403 the composition is skewed to polar residues; the sequence is SDVTFDSLPSSPSSATPHS. At Ser391 the chain carries Phosphoserine. Position 397 is a phosphoserine; by AMPK (Ser397). Basic and acidic residues-rich tracts occupy residues 421 to 435 and 444 to 469; these read GPRD…RDSE and SEKR…RHES. Ser434, Ser444, and Ser469 each carry phosphoserine. Phosphoserine; by autocatalysis is present on Ser473. Ser476 is modified (phosphoserine). Ser499 is modified (phosphoserine; by PKA).

It belongs to the protein kinase superfamily. Alpha-type protein kinase family. In terms of assembly, monomer or homodimer. Interacts with Calmodulin/CALM1; this interaction is strictly required for phosphorylation activity. In terms of processing, autophosphorylated at multiple residues, Thr-347 being the major site. Phosphorylated by AMP-activated protein kinase AMPK at Ser-397 leading to EEF2K activation and protein synthesis inhibition. Phosphorylated by TRPM7 at Ser-77 resulting in improved protein stability, higher EE2F phosphorylated and subsequently reduced rate of protein synthesis. Phosphorylation by other kinases such as CDK1 and MAPK13 at Ser-358 or RPS6KA1 and RPS6KB1 at Ser-365 instead decrease EEF2K activity and promote protein synthesis. In terms of tissue distribution, ubiquitously expressed. Particularly abundant in skeletal muscle and heart.

The enzyme catalyses [translation elongation factor 2] + ATP = [translation elongation factor 2]-phosphate + ADP + H(+). Undergoes calcium/calmodulin-dependent intramolecular autophosphorylation, and this results in it becoming partially calcium/calmodulin-independent. In terms of biological role, threonine kinase that regulates protein synthesis by controlling the rate of peptide chain elongation. Upon activation by a variety of upstream kinases including AMPK or TRPM7, phosphorylates the elongation factor EEF2 at a single site, renders it unable to bind ribosomes and thus inactive. In turn, the rate of protein synthesis is reduced. The sequence is that of Eukaryotic elongation factor 2 kinase (Eef2k) from Mus musculus (Mouse).